A 1834-amino-acid chain; its full sequence is Non-reducing polyketide synthase spyA (1834 aa).

Residues 91 to 255 enclose the Starter acyltransferase (SAT) domain; the sequence is LAPLTVIIHL…TRIPIYGRYH (165 aa). The Ketosynthase family 3 (KS3) domain maps to 385–801; it reads EHSIAVIGAA…GNNTAVIVCE (417 aa). Active-site for beta-ketoacyl synthase activity residues include Cys-551, His-687, and His-724. Residues 919–1164 enclose the Malonyl-CoA:ACP transacylase (MAT) domain; that stretch reads YEGSSLLRSH…KELGPCTWVE (246 aa). Residues 1269–1398 are N-terminal hotdog fold; that stretch reads PLVYLLRDEG…GVISLRQERH (130 aa). The 309-residue stretch at 1269–1577 folds into the PKS/mFAS DH domain; the sequence is PLVYLLRDEG…FVRITASSLN (309 aa). The segment at 1269–1577 is product template (PT) domain; that stretch reads PLVYLLRDEG…FVRITASSLN (309 aa). Residues 1428-1577 are C-terminal hotdog fold; it reads AISLKEGIIY…FVRITASSLN (150 aa). The Carrier 1 domain occupies 1616 to 1690; it reads SDILSILSHL…TLCQEIQTQR (75 aa). At Ser-1650 the chain carries O-(pantetheine 4'-phosphoryl)serine. Positions 1693–1720 are disordered; the sequence is RLARASRTTTATRNTSFSLGRRTSSTES. The span at 1697-1710 shows a compositional bias: low complexity; that stretch reads ASRTTTATRNTSFS. The Carrier 2 domain maps to 1731–1807; sequence SKSAAVLAQL…GLARLILASE (77 aa). An O-(pantetheine 4'-phosphoryl)serine modification is found at Ser-1767.

It depends on pantetheine 4'-phosphate as a cofactor.

The enzyme catalyses 2 malonyl-CoA + acetyl-CoA + 2 H(+) = triacetate lactone + 2 CO2 + 3 CoA. Its pathway is secondary metabolite biosynthesis; terpenoid biosynthesis. Non-reducing polyketide synthase; part of the gene cluster that mediates the biosynthesis of meroterpenoids called sartorypyrones. The biosynthesis of sartorypyrones begins with the production of triacetic acid lactone (TAL) by the NR-PKS spyA using one molecule of acetyl-CoA and two molecules of malonyl-CoA. As spyA lacks a thioesterase (TE) domain, TAL is likely generated through self-release from spyA by spontaneous lactonization. After production of TAL, the prenyltransferase spyF then conjugates geranylgeranyl pyrophosphate (GGPP) to TAL to form geranylgeranyl-triacetate lactone, for which the pathway-specific geranylgeranyl pyrophosphate synthase (GGPS) spyE is required to provide GGPP. Subsequently, geranylgeranyl-triacetate lactone is epoxidized at the terminal olein by the FAD-dependent monooxygenase spyC, followed by cyclization of the terpenoid component catalyzed by the terpene cyclase spyD to produce both the bicyclic sartorypyrone F and the monocyclic sartorypyrone D. Finally, the last step of the biosynthesis involves the acetylation of the meroterpenoids sartorypyrones D and F by the acetyltransferase SpyB to produce sartorypyrones A and G, respectively. In Aspergillus fumigatus (strain ATCC MYA-4609 / CBS 101355 / FGSC A1100 / Af293) (Neosartorya fumigata), this protein is Non-reducing polyketide synthase spyA.